We begin with the raw amino-acid sequence, 146 residues long: Putative pre-16S rRNA nuclease (146 aa).

Belongs to the YqgF nuclease family.

Its subcellular location is the cytoplasm. In terms of biological role, could be a nuclease involved in processing of the 5'-end of pre-16S rRNA. The chain is Putative pre-16S rRNA nuclease from Burkholderia mallei (strain SAVP1).